A 397-amino-acid polypeptide reads, in one-letter code: Acetate kinase 2 (397 aa).

Asn-8 provides a ligand contact to Mg(2+). Lys-15 is an ATP binding site. Residue Arg-89 coordinates substrate. Asp-146 serves as the catalytic Proton donor/acceptor. Residues 206–210 (HLGNG), 281–283 (DLR), and 329–333 (GIGEN) each bind ATP. Mg(2+) is bound at residue Glu-382.

Belongs to the acetokinase family. In terms of assembly, homodimer. It depends on Mg(2+) as a cofactor. Mn(2+) is required as a cofactor.

The protein resides in the cytoplasm. The catalysed reaction is acetate + ATP = acetyl phosphate + ADP. The protein operates within metabolic intermediate biosynthesis; acetyl-CoA biosynthesis; acetyl-CoA from acetate: step 1/2. Functionally, catalyzes the formation of acetyl phosphate from acetate and ATP. Can also catalyze the reverse reaction. This chain is Acetate kinase 2, found in Listeria monocytogenes serotype 4b (strain F2365).